We begin with the raw amino-acid sequence, 496 residues long: Anaerobic nitric oxide reductase flavorubredoxin (496 aa).

The interval 30–210 is zinc metallo-hydrolase; sequence TKGTSYNSYL…PFSALVTAKI (181 aa). Fe cation contacts are provided by His-79, Glu-81, Asp-83, His-147, Asp-166, and His-227. Residues 254–393 form the Flavodoxin-like domain; that stretch reads ITIFYDSMSN…LCREHGQFIA (140 aa). FMN contacts are provided by residues 260–264 and 342–369; these read SMSNN and AFGS…ETAV. The region spanning 444 to 495 is the Rubredoxin-like domain; the sequence is KQCMLCSVCNWVYDPEIGEPNQGVEPNTPWSSVPNDFLCPECHLGKDVFVEI. Fe cation is bound by residues Cys-449, Cys-452, Cys-482, and Cys-485.

This sequence in the N-terminal section; belongs to the zinc metallo-hydrolase group 3 family. As to quaternary structure, homotetramer. It depends on Fe cation as a cofactor. The cofactor is FMN.

Its subcellular location is the cytoplasm. Its pathway is nitrogen metabolism; nitric oxide reduction. Anaerobic nitric oxide reductase; uses NADH to detoxify nitric oxide (NO), protecting several 4Fe-4S NO-sensitive enzymes. Has at least 2 reductase partners, only one of which (NorW, flavorubredoxin reductase) has been identified. NO probably binds to the di-iron center; electrons enter from the NorW at rubredoxin and are transferred sequentially to the FMN center and the di-iron center. Also able to function as an aerobic oxygen reductase. The sequence is that of Anaerobic nitric oxide reductase flavorubredoxin from Aliivibrio fischeri (strain ATCC 700601 / ES114) (Vibrio fischeri).